A 321-amino-acid polypeptide reads, in one-letter code: ATP-dependent 6-phosphofructokinase (321 aa).

An ATP-binding site is contributed by glycine 12. 22 to 26 (RGVVR) contributes to the ADP binding site. Residues 73–74 (RF) and 103–106 (GDGS) each bind ATP. Aspartate 104 is a binding site for Mg(2+). 127–129 (TID) lines the substrate pocket. Aspartate 129 acts as the Proton acceptor in catalysis. Residue arginine 156 coordinates ADP. Substrate-binding positions include arginine 164 and 171-173 (MGR). Residues 187 to 189 (GCE), lysine 213, and 215 to 217 (KRH) each bind ADP. Substrate-binding positions include glutamate 224, arginine 245, and 251–254 (HTQR).

This sequence belongs to the phosphofructokinase type A (PFKA) family. ATP-dependent PFK group I subfamily. Prokaryotic clade 'B1' sub-subfamily. In terms of assembly, homotetramer. Mg(2+) serves as cofactor.

It localises to the cytoplasm. The enzyme catalyses beta-D-fructose 6-phosphate + ATP = beta-D-fructose 1,6-bisphosphate + ADP + H(+). It participates in carbohydrate degradation; glycolysis; D-glyceraldehyde 3-phosphate and glycerone phosphate from D-glucose: step 3/4. Allosterically activated by ADP and other diphosphonucleosides, and allosterically inhibited by phosphoenolpyruvate. Functionally, catalyzes the phosphorylation of D-fructose 6-phosphate to fructose 1,6-bisphosphate by ATP, the first committing step of glycolysis. In Glaesserella parasuis serovar 5 (strain SH0165) (Haemophilus parasuis), this protein is ATP-dependent 6-phosphofructokinase.